The chain runs to 255 residues: uncharacterized protein (255 aa).

Residues 1 to 23 (MKRLNKLVLGISFLFLVISITAG) form the signal peptide. Cys-24 carries the N-palmitoyl cysteine lipid modification. Residue Cys-24 is the site of S-diacylglycerol cysteine attachment.

Belongs to the staphylococcal tandem lipoprotein family.

It is found in the cell membrane. This is an uncharacterized protein from Staphylococcus aureus (strain N315).